A 271-amino-acid polypeptide reads, in one-letter code: 3'-phosphoadenosine 5'-phosphate phosphatase (271 aa).

Mg(2+)-binding residues include E73, D91, L93, D94, and D216. E73 is a binding site for substrate. Substrate is bound by residues 93–96 (LDGT) and D216.

Belongs to the inositol monophosphatase superfamily. As to quaternary structure, homodimer. It depends on Mg(2+) as a cofactor.

The enzyme catalyses adenosine 3',5'-bisphosphate + H2O = AMP + phosphate. It catalyses the reaction beta-D-fructose 1,6-bisphosphate + H2O = beta-D-fructose 6-phosphate + phosphate. The catalysed reaction is a myo-inositol phosphate + H2O = myo-inositol + phosphate. It participates in sulfur metabolism; sulfate assimilation. Phosphatase with a broad specificity. Its primary physiological function is to dephosphorylate 3'-phosphoadenosine 5'-phosphate (PAP) and 3'-phosphoadenosine 5'-phosphosulfate (PAPS). Thus, plays a role in mycobacterial sulfur metabolism, since it can serve as a key regulator of the sulfate assimilation pathway by controlling the pools of PAP and PAPS in the cell. To a lesser extent, is also able to hydrolyze inositol 1-phosphate (I-1-P), fructose 1,6-bisphosphate (FBP) (to fructose 6-phosphate (F-6-P)) and AMP in vitro, but this might not be significant in vivo. The protein is 3'-phosphoadenosine 5'-phosphate phosphatase (cysQ) of Mycobacterium leprae (strain TN).